Here is a 271-residue protein sequence, read N- to C-terminus: UPF0758 protein ACIAD3126 (271 aa).

The MPN domain occupies Asn120 to Leu242. Positions 191, 193, and 204 each coordinate Zn(2+). Residues His191–Asp204 carry the JAMM motif motif.

The protein belongs to the UPF0758 family.

This Acinetobacter baylyi (strain ATCC 33305 / BD413 / ADP1) protein is UPF0758 protein ACIAD3126.